The sequence spans 317 residues: Apolipoprotein E (317 aa).

Residues 1–18 form the signal peptide; sequence MRVLWVALVVTLLAGCRT. 8 tandem repeats follow at residues 79-100, 101-122, 123-144, 145-166, 167-188, 189-210, 211-232, and 233-254. The tract at residues 79–254 is 8 X 22 AA approximate tandem repeats; sequence ELIEESMKEV…RLDEMRDELE (176 aa). Methionine sulfoxide is present on methionine 142. Residues 157 to 167 are LDL and other lipoprotein receptors binding; sequence HLRNVRKRLVR. 161 to 164 serves as a coordination point for heparin; the sequence is VRKR. The segment at 209-289 is lipid-binding and lipoprotein association; sequence AATLSTRAGQ…GWFEPLVEDM (81 aa). Heparin is bound at residue 228 to 235; the sequence is GQKLRGRL. The interval 265–317 is homooligomerization; that stretch reads SQLRLQAEAFQARLKGWFEPLVEDMRRQWAGLVERMQSAVSISSSTSAPSDNQ. The interval 277–289 is specificity for association with VLDL; sequence RLKGWFEPLVEDM.

The protein belongs to the apolipoprotein A1/A4/E family. Homotetramer. May interact with ABCA1; functionally associated with ABCA1 in the biogenesis of HDLs. May interact with APP/A4 amyloid-beta peptide; the interaction is extremely stable in vitro but its physiological significance is unclear. May interact with MAPT. May interact with MAP2. In the cerebrospinal fluid, interacts with secreted SORL1. Interacts with PMEL; this allows the loading of PMEL luminal fragment on ILVs to induce fibril nucleation. In terms of processing, APOE exists as multiple glycosylated and sialylated glycoforms within cells and in plasma. The extent of glycosylation and sialylation are tissue and context specific. Glycated in plasma VLDL. Post-translationally, phosphorylated by FAM20C in the extracellular medium.

The protein resides in the secreted. It is found in the extracellular space. It localises to the extracellular matrix. Its subcellular location is the extracellular vesicle. The protein localises to the endosome. The protein resides in the multivesicular body. In terms of biological role, APOE is an apolipoprotein, a protein associating with lipid particles, that mainly functions in lipoprotein-mediated lipid transport between organs via the plasma and interstitial fluids. APOE is a core component of plasma lipoproteins and is involved in their production, conversion and clearance. Apolipoproteins are amphipathic molecules that interact both with lipids of the lipoprotein particle core and the aqueous environment of the plasma. As such, APOE associates with chylomicrons, chylomicron remnants, very low density lipoproteins (VLDL) and intermediate density lipoproteins (IDL) but shows a preferential binding to high-density lipoproteins (HDL). It also binds a wide range of cellular receptors including the LDL receptor/LDLR and the very low-density lipoprotein receptor/VLDLR that mediate the cellular uptake of the APOE-containing lipoprotein particles. Finally, APOE also has a heparin-binding activity and binds heparan-sulfate proteoglycans on the surface of cells, a property that supports the capture and the receptor-mediated uptake of APOE-containing lipoproteins by cells. The protein is Apolipoprotein E (APOE) of Sus scrofa (Pig).